Here is a 286-residue protein sequence, read N- to C-terminus: MKSEVVVRINENFKKLSRIVSEKGISTVCEEALCPNIMECWGSGTATFMIMGDICTRGCRFCYVKKGKPVLLDHEEPIKVAEAVREMGLDYVVITSVDRDDLADGGASHFSQVVKAVKEMNPDVIVEVLTPDFMGNKELVEKVIGSGVDVFAHNVETVRSLTPLVRDARASYEQSLRVLSYAKNVVKKSSILLGLGESLEEVVETMKDLRNVGVDILVLSQYMRPSIKQLEVKKRYNMEEYKELEKIAYSLGFSYVVALPHARTSYRAKEAYLRAMANVKNNNRWS.

Residues C29, C34, C40, C55, C59, C62, and S265 each coordinate [4Fe-4S] cluster. Residues 41-254 form the Radical SAM core domain; sequence WGSGTATFMI…EKIAYSLGFS (214 aa).

It belongs to the radical SAM superfamily. Lipoyl synthase family. [4Fe-4S] cluster serves as cofactor.

The protein localises to the cytoplasm. It catalyses the reaction [[Fe-S] cluster scaffold protein carrying a second [4Fe-4S](2+) cluster] + N(6)-octanoyl-L-lysyl-[protein] + 2 oxidized [2Fe-2S]-[ferredoxin] + 2 S-adenosyl-L-methionine + 4 H(+) = [[Fe-S] cluster scaffold protein] + N(6)-[(R)-dihydrolipoyl]-L-lysyl-[protein] + 4 Fe(3+) + 2 hydrogen sulfide + 2 5'-deoxyadenosine + 2 L-methionine + 2 reduced [2Fe-2S]-[ferredoxin]. It functions in the pathway protein modification; protein lipoylation via endogenous pathway; protein N(6)-(lipoyl)lysine from octanoyl-[acyl-carrier-protein]: step 2/2. Its function is as follows. Catalyzes the radical-mediated insertion of two sulfur atoms into the C-6 and C-8 positions of the octanoyl moiety bound to the lipoyl domains of lipoate-dependent enzymes, thereby converting the octanoylated domains into lipoylated derivatives. The chain is Lipoyl synthase from Sulfolobus acidocaldarius (strain ATCC 33909 / DSM 639 / JCM 8929 / NBRC 15157 / NCIMB 11770).